We begin with the raw amino-acid sequence, 62 residues long: UPF0434 protein FTL_1400 (62 aa).

The protein belongs to the UPF0434 family.

The sequence is that of UPF0434 protein FTL_1400 from Francisella tularensis subsp. holarctica (strain LVS).